Reading from the N-terminus, the 91-residue chain is uncharacterized protein (91 aa).

This is an uncharacterized protein from Escherichia coli (Bacteriophage T4).